The following is a 323-amino-acid chain: tRNA dimethylallyltransferase (323 aa).

21 to 28 (GPTACNKS) is an ATP binding site. Residue 23–28 (TACNKS) coordinates substrate. 3 interaction with substrate tRNA regions span residues 46–49 (DSAL), 171–175 (QRVLR), and 252–257 (RCVGYR).

The protein belongs to the IPP transferase family. As to quaternary structure, monomer. The cofactor is Mg(2+).

It carries out the reaction adenosine(37) in tRNA + dimethylallyl diphosphate = N(6)-dimethylallyladenosine(37) in tRNA + diphosphate. Its function is as follows. Catalyzes the transfer of a dimethylallyl group onto the adenine at position 37 in tRNAs that read codons beginning with uridine, leading to the formation of N6-(dimethylallyl)adenosine (i(6)A). The sequence is that of tRNA dimethylallyltransferase from Buchnera aphidicola subsp. Baizongia pistaciae (strain Bp).